A 559-amino-acid polypeptide reads, in one-letter code: Actin-binding protein WASF1 (559 aa).

Disordered regions lie at residues 170–202 (EDKR…DRRR), 304–383 (IENR…GVLH), and 412–490 (VHPL…HPST). Residues 182 to 202 (KNLDRPHEPEKVPRAPHDRRR) show a composition bias toward basic and acidic residues. Residues 304–313 (IENRPQSPAT) show a composition bias toward polar residues. Pro residues predominate over residues 322-332 (PTPPPPPPPLP). Over residues 333–346 (SALSTSSLRASMTS) the composition is skewed to low complexity. Arg341 is subject to Asymmetric dimethylarginine; alternate. Arg341 carries the post-translational modification Omega-N-methylarginine; alternate. Pro residues-rich tracts occupy residues 347-360 (TPPP…PPPA), 423-437 (LPPP…PPGI), and 460-477 (STAP…PPSQ). Residue Ser489 is modified to Phosphoserine. One can recognise a WH2 domain in the interval 497–514 (ARSVLLEAIRKGIQLRKV).

Belongs to the SCAR/WAVE family. In terms of assembly, component of the WAVE1 complex composed of ABI2, CYFIP1 or CYFIP2, BRK1, NCKAP1 and WASF1/WAVE1. Within the complex, a heterodimer containing NCKAP1 and CYFIP1 interacts with a heterotrimer formed by WAVE1, ABI2 and BRK1. CYFIP2 binds to activated RAC1 which causes the complex to dissociate, releasing activated WASF1. The complex can also be activated by NCK1. Binds actin and the Arp2/3 complex. Interacts with BAIAP2. Interacts with SHANK3; the interaction mediates the association of SHANK3 with the WAVE1 complex. Interacts with ABI1 (via N-terminus). Interacts with SORBS2; this interaction greatly enhances phosphorylation by ABL1 and dephosphorylation by PTPN12 and might mediate partial to focal adhesion sites.

It is found in the cytoplasm. The protein localises to the cytoskeleton. It localises to the synapse. Its subcellular location is the cell junction. The protein resides in the focal adhesion. Its function is as follows. Downstream effector molecule involved in the transmission of signals from tyrosine kinase receptors and small GTPases to the actin cytoskeleton. Promotes formation of actin filaments. Part of the WAVE complex that regulates lamellipodia formation. The WAVE complex regulates actin filament reorganization via its interaction with the Arp2/3 complex. As component of the WAVE1 complex, required for BDNF-NTRK2 endocytic trafficking and signaling from early endosomes. Also involved in the regulation of mitochondrial dynamics. This Pongo abelii (Sumatran orangutan) protein is Actin-binding protein WASF1 (WASF1).